A 138-amino-acid polypeptide reads, in one-letter code: Large ribosomal subunit protein uL16 (138 aa).

This sequence belongs to the universal ribosomal protein uL16 family. In terms of assembly, part of the 50S ribosomal subunit.

Binds 23S rRNA and is also seen to make contacts with the A and possibly P site tRNAs. The protein is Large ribosomal subunit protein uL16 of Neisseria gonorrhoeae (strain ATCC 700825 / FA 1090).